The primary structure comprises 195 residues: GTP-dependent dephospho-CoA kinase (195 aa).

Asp49, Val50, Asp68, Glu127, and Asp150 together coordinate GTP.

Belongs to the GTP-dependent DPCK family.

It catalyses the reaction 3'-dephospho-CoA + GTP = GDP + CoA + H(+). It functions in the pathway cofactor biosynthesis; coenzyme A biosynthesis. In terms of biological role, catalyzes the GTP-dependent phosphorylation of the 3'-hydroxyl group of dephosphocoenzyme A to form coenzyme A (CoA). This is GTP-dependent dephospho-CoA kinase from Methanosarcina mazei (strain ATCC BAA-159 / DSM 3647 / Goe1 / Go1 / JCM 11833 / OCM 88) (Methanosarcina frisia).